A 90-amino-acid polypeptide reads, in one-letter code: MTEDQARRSGGVGRRRFGARRKVCMFCADQIRVVDYKDVKRLQRCMSERGKILPRRRTGVCARHQRSLTVAIKRARHMALLPFVAAHIRS.

This sequence belongs to the bacterial ribosomal protein bS18 family. As to quaternary structure, part of the 30S ribosomal subunit. Forms a tight heterodimer with protein bS6.

Binds as a heterodimer with protein bS6 to the central domain of the 16S rRNA, where it helps stabilize the platform of the 30S subunit. This is Small ribosomal subunit protein bS18B from Roseiflexus sp. (strain RS-1).